The primary structure comprises 97 residues: Protein RnfH (97 aa).

This sequence belongs to the UPF0125 (RnfH) family.

The chain is Protein RnfH from Paramagnetospirillum magneticum (strain ATCC 700264 / AMB-1) (Magnetospirillum magneticum).